A 201-amino-acid chain; its full sequence is UPF0301 protein Arad_1256 (201 aa).

This sequence belongs to the UPF0301 (AlgH) family.

This is UPF0301 protein Arad_1256 from Rhizobium rhizogenes (strain K84 / ATCC BAA-868) (Agrobacterium radiobacter).